A 286-amino-acid chain; its full sequence is 4-hydroxybenzoate octaprenyltransferase (286 aa).

8 helical membrane-spanning segments follow: residues 20–40, 43–63, 96–116, 142–162, 167–187, 210–230, 235–255, and 266–286; these read IGTL…AQGL, IKVL…GCII, LFTL…PLVV, FLGI…LGEV, WWLF…YAIV, QIIG…GLVA, IYGL…RLIF, and FLNN…DYMI.

It belongs to the UbiA prenyltransferase family. Requires Mg(2+) as cofactor.

The protein localises to the cell inner membrane. It catalyses the reaction all-trans-octaprenyl diphosphate + 4-hydroxybenzoate = 4-hydroxy-3-(all-trans-octaprenyl)benzoate + diphosphate. The protein operates within cofactor biosynthesis; ubiquinone biosynthesis. Functionally, catalyzes the prenylation of para-hydroxybenzoate (PHB) with an all-trans polyprenyl group. Mediates the second step in the final reaction sequence of ubiquinone-8 (UQ-8) biosynthesis, which is the condensation of the polyisoprenoid side chain with PHB, generating the first membrane-bound Q intermediate 3-octaprenyl-4-hydroxybenzoate. This chain is 4-hydroxybenzoate octaprenyltransferase, found in Shewanella frigidimarina (strain NCIMB 400).